An 887-amino-acid polypeptide reads, in one-letter code: Amyloid-beta-like protein (887 aa).

Positions 1–27 are cleaved as a signal peptide; sequence MCAALRRNLLLRSLWVVLAIGTAQVQA. Topologically, residues 28-813 are extracellular; sequence ASPRWEPQIA…HAAKEGRNVY (786 aa). The segment at 30 to 133 is GFLD subdomain; it reads PRWEPQIAVL…KPFRCLGPFQ (104 aa). Positions 30 to 199 constitute an E1 domain; that stretch reads PRWEPQIAVL…SGVEFVCCPK (170 aa). Intrachain disulfides connect cysteine 40–cysteine 70, cysteine 81–cysteine 128, cysteine 106–cysteine 116, cysteine 143–cysteine 197, cysteine 154–cysteine 184, and cysteine 168–cysteine 196. The interval 141–199 is cuBD subdomain; the sequence is EGCLFDHIHNASRCWPFVRWNQTGAAACQERGMQMRSFAMLLPCGISVFSGVEFVCCPK. N-linked (GlcNAc...) asparagine glycosylation is found at asparagine 150 and asparagine 161. Disordered stretches follow at residues 225 to 365 and 377 to 396; these read NDEL…STPQ and NSGN…QPTS. Asparagine 237 and asparagine 240 each carry an N-linked (GlcNAc...) asparagine glycan. Acidic residues predominate over residues 246 to 267; that stretch reads NEDDLDDEDDLMGDDEEDDMVA. Residues 268-292 show a composition bias toward low complexity; sequence DEAATAGGSPNTGSSGDSNSGSLDD. Residues 293–321 are compositionally biased toward acidic residues; that stretch reads INAEYDSGEEGDNYEEDGAGSESEAEVEA. The segment covering 329–352 has biased composition (low complexity); that stretch reads AKVVSLKSDSSSPSSAPVAPAPEK. Positions 395-597 constitute an E2 domain; it reads TSDPYFTHFD…AKIAQLMNDY (203 aa). N-linked (GlcNAc...) asparagine glycosylation is present at asparagine 574. Residues 675–743 are disordered; the sequence is KSQVAEQQSQ…TEYGEATVSS (69 aa). Residues 681-699 are compositionally biased toward low complexity; sequence QQSQPTQSSTQSQAQQQQQ. The chain crosses the membrane as a helical span at residues 814 to 834; sequence FTLSFAGIALMAAVFVGVAVA. Residues 835–887 lie on the Cytoplasmic side of the membrane; the sequence is KWRTSRSPHAQGFIEVDQNVTTHHPIVREEKIVPNMQINGYENPTYKYFEVKE. Positions 875–880 match the YENPXY motif motif; the sequence is YENPTY.

This sequence belongs to the APP family. As to quaternary structure, interacts (via the intracellular domain, ICD) with APP-BP1. As to expression, expressed in postmitotic neurons in the central and peripheral nervous systems. Within the nervous system, transcripts are not observed in neuroblasts, newly generated neurons and at least one class of presumed glial cells.

The protein localises to the membrane. During development, plays a role in the regulation of the neddylation pathway. Appl and APP-BP1 interact antagonistically during development. This is Amyloid-beta-like protein (Appl) from Drosophila melanogaster (Fruit fly).